We begin with the raw amino-acid sequence, 200 residues long: Bombinin-like peptides 3 (200 aa).

A signal peptide (or 18) is located at residues 1 to 16; it reads MNFKYIVAVSILIASA. Phe68 and Phe129 each carry phenylalanine amide.

The protein belongs to the bombinin family. Expressed by the skin glands.

The protein localises to the secreted. In terms of biological role, has antimicrobial activity, but no hemolytic activity. Preference on killing Gram-negative non-enteric bacteria. In Bombina orientalis (Oriental fire-bellied toad), this protein is Bombinin-like peptides 3.